A 398-amino-acid chain; its full sequence is Succinate--CoA ligase [ADP-forming] subunit beta (398 aa).

An ATP-grasp domain is found at 9–253 (MALLNERGVS…AGASDPLEQE (245 aa)). ATP-binding positions include Lys46, 53 to 55 (GRG), Val111, and Glu116. Mg(2+)-binding residues include Asn208 and Asp222. Substrate contacts are provided by residues Asn273 and 330 to 332 (GIM).

It belongs to the succinate/malate CoA ligase beta subunit family. As to quaternary structure, heterotetramer of two alpha and two beta subunits. Mg(2+) is required as a cofactor.

The catalysed reaction is succinate + ATP + CoA = succinyl-CoA + ADP + phosphate. It catalyses the reaction GTP + succinate + CoA = succinyl-CoA + GDP + phosphate. It participates in carbohydrate metabolism; tricarboxylic acid cycle; succinate from succinyl-CoA (ligase route): step 1/1. Its function is as follows. Succinyl-CoA synthetase functions in the citric acid cycle (TCA), coupling the hydrolysis of succinyl-CoA to the synthesis of either ATP or GTP and thus represents the only step of substrate-level phosphorylation in the TCA. The beta subunit provides nucleotide specificity of the enzyme and binds the substrate succinate, while the binding sites for coenzyme A and phosphate are found in the alpha subunit. The chain is Succinate--CoA ligase [ADP-forming] subunit beta from Zymomonas mobilis subsp. mobilis (strain ATCC 31821 / ZM4 / CP4).